The chain runs to 168 residues: G/U mismatch-specific DNA glycosylase (168 aa).

The protein belongs to the uracil-DNA glycosylase (UDG) superfamily. TDG/mug family. As to quaternary structure, binds DNA as a monomer.

The protein resides in the cytoplasm. The enzyme catalyses Specifically hydrolyzes mismatched double-stranded DNA and polynucleotides, releasing free uracil.. Excises ethenocytosine and uracil, which can arise by alkylation or deamination of cytosine, respectively, from the corresponding mispairs with guanine in ds-DNA. It is capable of hydrolyzing the carbon-nitrogen bond between the sugar-phosphate backbone of the DNA and the mispaired base. The complementary strand guanine functions in substrate recognition. Required for DNA damage lesion repair in stationary-phase cells. The polypeptide is G/U mismatch-specific DNA glycosylase (Cronobacter sakazakii (strain ATCC BAA-894) (Enterobacter sakazakii)).